The following is a 433-amino-acid chain: L-lysine 2,3-aminomutase (433 aa).

The Radical SAM core domain occupies 122–334 (HRYPDRVLFY…SLIGHTTGFA (213 aa)). Residues C136, C140, and C143 each coordinate [4Fe-4S] cluster. Position 279 (C279) interacts with Zn(2+). The residue at position 348 (K348) is an N6-(pyridoxal phosphate)lysine. Zn(2+) is bound by residues C389, C392, and C396.

This sequence belongs to the radical SAM superfamily. KamA family. The cofactor is [4Fe-4S] cluster. Pyridoxal 5'-phosphate serves as cofactor. Zn(2+) is required as a cofactor.

The enzyme catalyses L-lysine = (3S)-3,6-diaminohexanoate. In terms of biological role, catalyzes the interconversion of L-alpha-lysine and L-beta-lysine. Is involved in the biosynthesis pathway of N6-acetyl-beta-lysine, a compatible solute produced by methanogenic archaea that helps cells to cope with salt stress. The chain is L-lysine 2,3-aminomutase (ablA) from Methanococcus maripaludis (strain DSM 14266 / JCM 13030 / NBRC 101832 / S2 / LL).